Reading from the N-terminus, the 215-residue chain is Pyrrolidone-carboxylate peptidase (215 aa).

Catalysis depends on residues Glu-80, Cys-143, and His-167.

It belongs to the peptidase C15 family. In terms of assembly, homotetramer.

It localises to the cytoplasm. The catalysed reaction is Release of an N-terminal pyroglutamyl group from a polypeptide, the second amino acid generally not being Pro.. Removes 5-oxoproline from various penultimate amino acid residues except L-proline. This Bacillus cereus (strain G9842) protein is Pyrrolidone-carboxylate peptidase.